The following is an 89-amino-acid chain: UPF0335 protein RPC_3979 (89 aa).

The protein belongs to the UPF0335 family.

This chain is UPF0335 protein RPC_3979, found in Rhodopseudomonas palustris (strain BisB18).